The following is a 964-amino-acid chain: Reticulon-3 (964 aa).

Residues 1–24 (MAESSAATQSPSVSSSSSGAEPSA) show a composition bias toward low complexity. 3 disordered regions span residues 1-32 (MAES…GGSP), 68-109 (AGLS…SETL), and 179-200 (WVVK…DRSA). N-acetylalanine is present on alanine 2. Over 2–795 (AESSAATQSP…KKTGFVFGTT (794 aa)) the chain is Cytoplasmic. Phosphoserine is present on serine 31. Residues 80–91 (SKSMTSSFLSSS) show a composition bias toward low complexity. Residues serine 217, serine 225, serine 230, serine 233, serine 270, serine 303, and serine 429 each carry the phosphoserine modification. A disordered region spans residues 479–536 (ITEKPDSLPSAAAKTSEREIKETPSRETVRSEMCENSEQPQAQPETPTQKSLEGEVAS). Residues 493 to 511 (TSEREIKETPSRETVRSEM) are compositionally biased toward basic and acidic residues. Over residues 516–527 (EQPQAQPETPTQ) the composition is skewed to low complexity. Serine 529 bears the Phosphoserine mark. The residue at position 593 (threonine 593) is a Phosphothreonine. A phosphoserine mark is found at serine 596, serine 597, and serine 673. Disordered stretches follow at residues 645-674 (ELSG…TMSP) and 697-723 (VQDE…SSSD). Polar residues predominate over residues 712–723 (FAPQSGPQSSSD). The region spanning 776–964 (VHDLIFWRDV…LPGIAKKKAE (189 aa)) is the Reticulon domain. Residues 796-819 (LIMLLSLAAFSVISVVSYLILALL) constitute an intramembrane region (helical). The Cytoplasmic portion of the chain corresponds to 820-876 (SVTISFRVYKSVIQAVQKSEEGHPFKAYLDVDITLSSEAFHNYMNAAMVHVNKALKL). The segment at residues 877-899 (IIRLFLVEDLVDSLKLAVFMWLM) is an intramembrane region (helical). Residues 900–903 (TYVG) are Cytoplasmic-facing. Positions 904-926 (AVFNGITLLILAELLVFSVPIVY) form an intramembrane region, helical. The interaction with FADD stretch occupies residues 919-964 (VFSVPIVYEKYKTQIDHYVGIARDQTKSIVEKIQAKLPGIAKKKAE). Residues 927–964 (EKYKTQIDHYVGIARDQTKSIVEKIQAKLPGIAKKKAE) are Cytoplasmic-facing. Residues 932–934 (QID) form an interaction with BACE1 region.

In terms of assembly, homodimer. Interacts with RTN4. Isoform 3 interacts with BACE1, BACE2, BCL2 and FADD. Interacts with ATL1 and ATL2. Isoform 3 interacts with TMEM33. Interacts with ZFYVE27 and with KIF5A in a ZFYVE27-dependent manner. Interacts with RIGI. Interacts with TRIM25. In terms of tissue distribution, isoform 1, isoform 3, isoform 4 and isoform 5 are expressed in spinal cord. Isoform 1 is present in brain, where it is expressed in the neurons of cerebral cortex, hippocampus, hypothalamus and cerebellum (at protein level).

The protein localises to the endoplasmic reticulum membrane. It localises to the golgi apparatus membrane. May be involved in membrane trafficking in the early secretory pathway. Inhibits BACE1 activity and amyloid precursor protein processing. May induce caspase-8 cascade and apoptosis. May favor BCL2 translocation to the mitochondria upon endoplasmic reticulum stress. Induces the formation of endoplasmic reticulum tubules. Also acts as an inflammation-resolving regulator by interacting with both TRIM25 and RIGI, subsequently impairing RIGI 'Lys-63'-linked polyubiquitination leading to IRF3 and NF-kappa-B inhibition. The chain is Reticulon-3 (Rtn3) from Mus musculus (Mouse).